The chain runs to 236 residues: Adenosine 5'-phosphosulfate reductase 2 (236 aa).

[4Fe-4S] cluster-binding residues include Cys-122, Cys-123, Cys-205, and Cys-208. A disordered region spans residues Asn-216 to Glu-236. Cys-231 functions as the Nucleophile; cysteine thiosulfonate intermediate in the catalytic mechanism.

This sequence belongs to the PAPS reductase family. CysH subfamily. It depends on [4Fe-4S] cluster as a cofactor.

It localises to the cytoplasm. It carries out the reaction [thioredoxin]-disulfide + sulfite + AMP + 2 H(+) = adenosine 5'-phosphosulfate + [thioredoxin]-dithiol. It participates in sulfur metabolism; hydrogen sulfide biosynthesis; sulfite from sulfate. Catalyzes the formation of sulfite from adenosine 5'-phosphosulfate (APS) using thioredoxin as an electron donor. The chain is Adenosine 5'-phosphosulfate reductase 2 from Bacillus subtilis (strain 168).